We begin with the raw amino-acid sequence, 188 residues long: Ribosome maturation factor RimP (188 aa).

It belongs to the RimP family.

It localises to the cytoplasm. Required for maturation of 30S ribosomal subunits. This Erythrobacter litoralis (strain HTCC2594) protein is Ribosome maturation factor RimP.